Consider the following 246-residue polypeptide: ATP synthase subunit a (246 aa).

Positions Met-1–Tyr-3 are cleaved as a propeptide — removed in mature form. A run of 7 helical transmembrane segments spans residues Ile-20–Phe-40, Trp-56–Gly-76, Phe-82–Ile-102, Leu-112–Tyr-132, Phe-138–Ile-158, Ala-176–Met-196, and Phe-203–Ile-223.

It belongs to the ATPase A chain family. F-type ATPases have 2 components, CF(1) - the catalytic core - and CF(0) - the membrane proton channel. CF(1) has five subunits: alpha(3), beta(3), gamma(1), delta(1), epsilon(1). CF(0) has three main subunits: a, b and c.

The protein localises to the mitochondrion inner membrane. Its function is as follows. Mitochondrial membrane ATP synthase (F(1)F(0) ATP synthase or Complex V) produces ATP from ADP in the presence of a proton gradient across the membrane which is generated by electron transport complexes of the respiratory chain. F-type ATPases consist of two structural domains, F(1) - containing the extramembraneous catalytic core and F(0) - containing the membrane proton channel, linked together by a central stalk and a peripheral stalk. During catalysis, ATP synthesis in the catalytic domain of F(1) is coupled via a rotary mechanism of the central stalk subunits to proton translocation. Key component of the proton channel; it may play a direct role in the translocation of protons across the membrane. This is ATP synthase subunit a (ATP6) from Candida albicans (strain SC5314 / ATCC MYA-2876) (Yeast).